Here is a 686-residue protein sequence, read N- to C-terminus: Secretin GspD 2 (686 aa).

Residues 1–40 (MFWRDITLSVWRKKTTGLKTKKRLLPLVLAAALCSSPVWA) form the signal peptide. The N0, contacts GspC2 stretch occupies residues 41-140 (EEATFTANFK…VGEGSDNYAG (100 aa)). An N1 region spans residues 142 to 206 (EMVTKVVPVR…EVIQRVDHAG (65 aa)). An N2 region spans residues 207–279 (NRTEEVIPLD…LIRRLDSEME (73 aa)). Residues 282-357 (GNSQVFYLKY…SLQSVIEQLD (76 aa)) form an N3 region. Residues 360 to 627 (RAQVHVEALI…VFIRPTILRD (268 aa)) are secretin. The cap gate stretch occupies residues 414–433 (PQKGSTVISENGATTINPDT). Residues 629–686 (MAADGVSQRKYNYMRAEQIYRDEQGLSLMPHTAQPVLPAQNQALPPEVRAFLNAGRTR) are s domain, contacts AspS2.

It belongs to the bacterial secretin family. GSP D subfamily. As to quaternary structure, forms a cylindrical channel with 15 subunits, each of which interacts with the surrounding pilotin AspS2 proteins (also called GspS-beta). Interacts with inner cell membrane protein GspC2 in the periplasm. Forms multimers in the outer membrane. The isolated N0 domain forms dimers that self-assemble into rings.

The protein resides in the cell outer membrane. In terms of biological role, part of a type II secretion system (T2SS, formerly general secretion pathway, GSP) for the export of folded proteins across the outer membrane. This subunit forms the outer membrane channel. The chain is Secretin GspD 2 (gspD2) from Escherichia coli O78:H11 (strain H10407 / ETEC).